The chain runs to 141 residues: Protein C19orf12 homolog (141 aa).

The chain crosses the membrane as a helical span at residues 37 to 57 (AVAFVGGLVGGPPGLAVGGAV).

Belongs to the C19orf12 family.

The protein resides in the mitochondrion. It is found in the mitochondrion membrane. It localises to the endoplasmic reticulum. Its subcellular location is the cytoplasm. The protein localises to the cytosol. This chain is Protein C19orf12 homolog, found in Bos taurus (Bovine).